A 319-amino-acid polypeptide reads, in one-letter code: Zinc finger protein C19B12.07c (319 aa).

The C2H2-type zinc-finger motif lies at 146 to 170 (FRCLCCHVPCKNKKLLREHMNNKRH).

The protein belongs to the ZNF277 family.

The protein resides in the nucleus. The protein is Zinc finger protein C19B12.07c of Schizosaccharomyces pombe (strain 972 / ATCC 24843) (Fission yeast).